Here is a 261-residue protein sequence, read N- to C-terminus: Sulfur carrier protein FdhD (261 aa).

Cys105 acts as the Cysteine persulfide intermediate in catalysis. 245–250 (FIRGDR) lines the Mo-bis(molybdopterin guanine dinucleotide) pocket.

Belongs to the FdhD family.

The protein localises to the cytoplasm. In terms of biological role, required for formate dehydrogenase (FDH) activity. Acts as a sulfur carrier protein that transfers sulfur from IscS to the molybdenum cofactor prior to its insertion into FDH. The protein is Sulfur carrier protein FdhD of Listeria monocytogenes serovar 1/2a (strain ATCC BAA-679 / EGD-e).